A 795-amino-acid polypeptide reads, in one-letter code: Phenylalanine--tRNA ligase beta subunit (795 aa).

The tRNA-binding domain maps to 39-148 (AGEFNGVVVG…ADAPVGKDFR (110 aa)). Positions 401-476 (PKLNKVQLRR…RIYGYNSIPN (76 aa)) constitute a B5 domain. Aspartate 454, aspartate 460, glutamate 463, and glutamate 464 together coordinate Mg(2+). In terms of domain architecture, FDX-ACB spans 701–794 (SKFPANKRDL…LKDRFNAYLR (94 aa)).

The protein belongs to the phenylalanyl-tRNA synthetase beta subunit family. Type 1 subfamily. As to quaternary structure, tetramer of two alpha and two beta subunits. The cofactor is Mg(2+).

The protein resides in the cytoplasm. It carries out the reaction tRNA(Phe) + L-phenylalanine + ATP = L-phenylalanyl-tRNA(Phe) + AMP + diphosphate + H(+). This chain is Phenylalanine--tRNA ligase beta subunit, found in Mannheimia succiniciproducens (strain KCTC 0769BP / MBEL55E).